The following is a 102-amino-acid chain: RxLR effector protein PexRD41 (102 aa).

An N-terminal signal peptide occupies residues 1–21; it reads MRSIFYFALAFAALTCSNASA. Positions 39–53 match the RxLR-dEER motif; sequence RSLRVAGQEAARGEE.

This sequence belongs to the RxLR effector family. In terms of assembly, interacts with host KRBP1.

It is found in the secreted. The protein resides in the host cytoplasm. Its subcellular location is the host nucleus. It localises to the host nucleolus. Effector that enhances P.infestans colonization of host plant leaves. During the early stages of P.infestans infection, interacts with and stabilizes host potato K-homology (KH) RNA-binding protein KRBP1, leading to its accumulation. The sequence is that of RxLR effector protein PexRD41 from Phytophthora infestans (strain T30-4) (Potato late blight agent).